Here is a 506-residue protein sequence, read N- to C-terminus: MTYPGPPRPVRISATPLAELADQLGVAAPDGSAEITGITHDSRAVRPGDLYAALPGARLHGADFVTQAAGLGAAAVLTDPAGAERAAAAGLPALVVDDPRARMGELAATIYGHPGRDLLQIGITGTSGKTTTAYLVEGGLRTAKSTGLIGTVEMRIGDERIKSERTTPEATDLQALFAVMRERGTEAVAMEVSSHALVLGRVDACVFDIAVFTNLSPEHMEFHSGMEDYFQAKAQLFTPKRSRLGVVNVDDEYGRRLAKEATVPVVTYSAEGHPDADWRADEVEVGPLDSTFTVLGPKGERIAAKSPLAGPFNVANTLAAIVALAAAGLDPQSAADGVAAVPGVPGRLERVDEGQPFFAVVDYAHKTDAVESVLRALRKVTEGKLHAVLGCGGDRDTTKREPMGAAVARFADTAVLTSDNPRSEDPLAILATMLQGAASVPAHERGEVQVFEDRAAAIAAAVARAEPGDTVLVAGKGHEQGQDIAGVVRPFDDRQVLREAIKKTQG.

Ser42 lines the UDP-N-acetyl-alpha-D-muramoyl-L-alanyl-D-glutamate pocket. Residue 125 to 131 (GTSGKTT) coordinates ATP. UDP-N-acetyl-alpha-D-muramoyl-L-alanyl-D-glutamate-binding positions include 166-167 (TT), Ser193, and Arg201. The residue at position 233 (Lys233) is an N6-carboxylysine. Meso-2,6-diaminopimelate-binding positions include Arg395, 419–422 (DNPR), Gly475, and Glu479. The Meso-diaminopimelate recognition motif motif lies at 419–422 (DNPR).

This sequence belongs to the MurCDEF family. MurE subfamily. The cofactor is Mg(2+). Post-translationally, carboxylation is probably crucial for Mg(2+) binding and, consequently, for the gamma-phosphate positioning of ATP.

The protein localises to the cytoplasm. It catalyses the reaction UDP-N-acetyl-alpha-D-muramoyl-L-alanyl-D-glutamate + meso-2,6-diaminopimelate + ATP = UDP-N-acetyl-alpha-D-muramoyl-L-alanyl-gamma-D-glutamyl-meso-2,6-diaminopimelate + ADP + phosphate + H(+). Its pathway is cell wall biogenesis; peptidoglycan biosynthesis. Its function is as follows. Catalyzes the addition of meso-diaminopimelic acid to the nucleotide precursor UDP-N-acetylmuramoyl-L-alanyl-D-glutamate (UMAG) in the biosynthesis of bacterial cell-wall peptidoglycan. The sequence is that of UDP-N-acetylmuramoyl-L-alanyl-D-glutamate--2,6-diaminopimelate ligase from Streptomyces coelicolor (strain ATCC BAA-471 / A3(2) / M145).